The following is a 1414-amino-acid chain: Phenyloxazoline synthase MbtB (1414 aa).

The 74-residue stretch at 5-78 (TACSEIIRAE…AWSQLVSAGT (74 aa)) folds into the Carrier 1 domain. O-(pantetheine 4'-phosphoryl)serine is present on serine 39. A condensation/cyclization region spans residues 96–394 (EGEPFPLAPM…SSLLLDVDLT (299 aa)). Positions 579–975 (SYAQLRDQAS…RLPGVHAAAA (397 aa)) are adenylation. The 79-residue stretch at 1057–1135 (APRTVLQRAL…ALAQLLTGRE (79 aa)) folds into the Carrier 2 domain. O-(pantetheine 4'-phosphoryl)serine is present on serine 1094. The tract at residues 1188–1413 (GAVLVFPHAG…AVARMVSADV (226 aa)) is thioesterase.

Belongs to the ATP-dependent AMP-binding enzyme family. MbtB subfamily. The cofactor is pantetheine 4'-phosphate. 4'-phosphopantetheine is transferred from CoA to a specific serine in each of the two carrier protein domains, leading to their activation from apo to holo forms.

Its pathway is siderophore biosynthesis; mycobactin biosynthesis. Functionally, involved in the initial steps of the mycobactin biosynthetic pathway. Putatively couples activated salicylic acid with serine or threonine and cyclizes this precursor to the hydroxyphenyloxazoline ring system present in this class of siderophores. Essential for growth in macrophages. The sequence is that of Phenyloxazoline synthase MbtB (mbtB) from Mycobacterium tuberculosis (strain ATCC 25618 / H37Rv).